Here is a 293-residue protein sequence, read N- to C-terminus: Insulin-like growth factor-binding protein 3 (293 aa).

The N-terminal stretch at 1–27 is a signal peptide; it reads MQRARPALWAAALIALALLRGPPAARA. The IGFBP N-terminal domain maps to 36-119; that stretch reads PVVRCEPCDA…LDGRGICANA (84 aa). Intrachain disulfides connect cysteine 40–cysteine 69, cysteine 43–cysteine 71, cysteine 51–cysteine 72, cysteine 60–cysteine 75, cysteine 83–cysteine 96, and cysteine 90–cysteine 116. Residues asparagine 118 and asparagine 138 are each glycosylated (N-linked (GlcNAc...) asparagine). Disordered stretches follow at residues 132–166 and 178–213; these read APPA…PDSK and KKGH…TEYG. Serine 150 bears the Phosphoserine mark. Over residues 178-192 the composition is skewed to basic and acidic residues; the sequence is KKGHAKDSQRYKVDY. A compositionally biased stretch (polar residues) spans 193-204; it reads ESQSTDTQNFSS. The N-linked (GlcNAc...) asparagine glycan is linked to asparagine 201. Serine 203 bears the Phosphoserine mark. In terms of domain architecture, Thyroglobulin type-1 spans 212 to 287; that stretch reads YGPCRREMED…DVKGKGDVHC (76 aa). Cystine bridges form between cysteine 215/cysteine 242, cysteine 253/cysteine 264, and cysteine 266/cysteine 287.

As to quaternary structure, interacts with XLKD1. Binds IGF2 more than IGF1. Forms a ternary complex of about 140 to 150 kDa with IGF1 or IGF2 and a 85 kDa glycoprotein (ALS). Interacts with humanin; humanin competes with importin KPNB1 for binding to IGFBP3, blocking IGFBP3 nuclear import and IGFBP3-mediated apoptosis. Interacts with TMEM219. Interacts with RXRA; this interaction modulates the transcriptional activity of RXRA. Interacts with LRP1; this interaction mediates cell growth inhibition independent of IGF1. In terms of processing, phosphorylated by FAM20C in the extracellular medium. Phosphorylated by CK2; resulting in decreased nuclear localization.

It localises to the secreted. It is found in the nucleus. Multifunctional protein that plays a critical role in regulating the availability of IGFs such as IGF1 and IGF2 to their receptors and thereby regulates IGF-mediated cellular processes including proliferation, differentiation, and apoptosis in a cell-type specific manner. Also exhibits IGF-independent antiproliferative and apoptotic effects mediated by its receptor TMEM219/IGFBP-3R. Inhibits the positive effect of humanin on insulin sensitivity. Promotes testicular germ cell apoptosis. Acts via LRP-1/alpha2M receptor, also known as TGF-beta type V receptor, to mediate cell growth inhibition independent of IGF1. Mechanistically, induces serine-specific dephosphorylation of IRS1 or IRS2 upon ligation to its receptor, leading to the inhibitory cascade. In the nucleus, interacts with transcription factors such as retinoid X receptor-alpha/RXRA to regulate transcriptional signaling and apoptosis. The sequence is that of Insulin-like growth factor-binding protein 3 (IGFBP3) from Sus scrofa (Pig).